The primary structure comprises 51 residues: Large ribosomal subunit protein eL39 (51 aa).

This sequence belongs to the eukaryotic ribosomal protein eL39 family.

The sequence is that of Large ribosomal subunit protein eL39 (rpl39e) from Thermoplasma acidophilum (strain ATCC 25905 / DSM 1728 / JCM 9062 / NBRC 15155 / AMRC-C165).